A 110-amino-acid polypeptide reads, in one-letter code: Small ribosomal subunit protein bS16 (110 aa).

A disordered region spans residues 84–110; it reads KRAPRNNPEKAVPRKERKAAAEAAAKA. Residues 90 to 103 show a composition bias toward basic and acidic residues; sequence NPEKAVPRKERKAA.

The protein belongs to the bacterial ribosomal protein bS16 family.

The sequence is that of Small ribosomal subunit protein bS16 from Afipia carboxidovorans (strain ATCC 49405 / DSM 1227 / KCTC 32145 / OM5) (Oligotropha carboxidovorans).